A 353-amino-acid chain; its full sequence is Paraneoplastic antigen Ma1 homolog (353 aa).

It belongs to the PNMA family. As to expression, predominantly expressed in testis. Very low levels in the brain, including in the piriform cortex, hippocampus and some subcortical nuclei.

The protein resides in the nucleus. Its subcellular location is the nucleolus. The chain is Paraneoplastic antigen Ma1 homolog (Pnma1) from Mus musculus (Mouse).